We begin with the raw amino-acid sequence, 122 residues long: Large ribosomal subunit protein uL14 (122 aa).

This sequence belongs to the universal ribosomal protein uL14 family. As to quaternary structure, part of the 50S ribosomal subunit. Forms a cluster with proteins L3 and L19. In the 70S ribosome, L14 and L19 interact and together make contacts with the 16S rRNA in bridges B5 and B8.

Functionally, binds to 23S rRNA. Forms part of two intersubunit bridges in the 70S ribosome. This chain is Large ribosomal subunit protein uL14, found in Exiguobacterium sp. (strain ATCC BAA-1283 / AT1b).